The primary structure comprises 546 residues: Phosphoglucomutase (546 aa).

Catalysis depends on Ser-135, which acts as the Phosphoserine intermediate. Residues Ser-135, Asp-288, Asp-290, and Asp-292 each coordinate Mg(2+).

The protein belongs to the phosphohexose mutase family. It depends on Mg(2+) as a cofactor.

The catalysed reaction is alpha-D-glucose 1-phosphate = alpha-D-glucose 6-phosphate. It functions in the pathway glycolipid metabolism; diglucosyl-diacylglycerol biosynthesis. In terms of biological role, catalyzes the interconversion between glucose-6-phosphate and alpha-glucose-1-phosphate. This is the first step in the biosynthesis of diglucosyl-diacylglycerol (Glc2-DAG), i.e. a glycolipid found in the membrane, which is also used as a membrane anchor for lipoteichoic acid (LTA). The chain is Phosphoglucomutase (pgcA) from Staphylococcus epidermidis (strain ATCC 12228 / FDA PCI 1200).